Reading from the N-terminus, the 154-residue chain is 17 kDa surface antigen (154 aa).

Residues 1-19 form the signal peptide; it reads MKLLSKIMIIALAASMLQA. C20 is lipidated: N-palmitoyl cysteine. C20 is lipidated: S-diacylglycerol cysteine.

It belongs to the rickettsiale 17 kDa surface antigen family.

The protein localises to the cell outer membrane. The protein is 17 kDa surface antigen (omp) of Rickettsia montanensis.